Reading from the N-terminus, the 239-residue chain is Ribosomal RNA small subunit methyltransferase G (239 aa).

S-adenosyl-L-methionine-binding positions include Gly-78, Phe-83, 129-130 (AE), and Arg-148.

It belongs to the methyltransferase superfamily. RNA methyltransferase RsmG family.

The protein resides in the cytoplasm. Its function is as follows. Specifically methylates the N7 position of a guanine in 16S rRNA. This Alkaliphilus oremlandii (strain OhILAs) (Clostridium oremlandii (strain OhILAs)) protein is Ribosomal RNA small subunit methyltransferase G.